Reading from the N-terminus, the 293-residue chain is GTP cyclohydrolase FolE2 (293 aa).

The protein belongs to the GTP cyclohydrolase IV family.

It catalyses the reaction GTP + H2O = 7,8-dihydroneopterin 3'-triphosphate + formate + H(+). It functions in the pathway cofactor biosynthesis; 7,8-dihydroneopterin triphosphate biosynthesis; 7,8-dihydroneopterin triphosphate from GTP: step 1/1. Its function is as follows. Converts GTP to 7,8-dihydroneopterin triphosphate. The chain is GTP cyclohydrolase FolE2 from Pseudomonas entomophila (strain L48).